Consider the following 689-residue polypeptide: Glycine--tRNA ligase beta subunit (689 aa).

Belongs to the class-II aminoacyl-tRNA synthetase family. As to quaternary structure, tetramer of two alpha and two beta subunits.

The protein resides in the cytoplasm. The enzyme catalyses tRNA(Gly) + glycine + ATP = glycyl-tRNA(Gly) + AMP + diphosphate. The polypeptide is Glycine--tRNA ligase beta subunit (Photobacterium profundum (strain SS9)).